Here is a 587-residue protein sequence, read N- to C-terminus: Aspartate--tRNA ligase (587 aa).

Glu174 serves as a coordination point for L-aspartate. The interval 198-201 is aspartate; sequence QITK. L-aspartate is bound at residue Arg220. Residues 220–222 and Gln229 each bind ATP; that span reads RDE. His443 serves as a coordination point for L-aspartate. Residue Glu477 coordinates ATP. Residue Arg484 coordinates L-aspartate. ATP is bound at residue 529 to 532; it reads GLDR.

The protein belongs to the class-II aminoacyl-tRNA synthetase family. Type 1 subfamily. In terms of assembly, homodimer.

Its subcellular location is the cytoplasm. The catalysed reaction is tRNA(Asp) + L-aspartate + ATP = L-aspartyl-tRNA(Asp) + AMP + diphosphate. Catalyzes the attachment of L-aspartate to tRNA(Asp) in a two-step reaction: L-aspartate is first activated by ATP to form Asp-AMP and then transferred to the acceptor end of tRNA(Asp). This chain is Aspartate--tRNA ligase, found in Streptococcus pneumoniae (strain ATCC 700669 / Spain 23F-1).